Here is a 375-residue protein sequence, read N- to C-terminus: Alcohol dehydrogenase 1 (375 aa).

Ser-1 carries the post-translational modification N-acetylserine. Residues Cys-46, His-67, Cys-97, Cys-100, Cys-103, Cys-111, and Cys-174 each coordinate Zn(2+). Residues 199-204, Asp-223, Lys-228, 293-295, and Arg-370 each bind NAD(+); these read GLGGVG and VGV.

It belongs to the zinc-containing alcohol dehydrogenase family. Class-I subfamily. As to quaternary structure, homodimer. Zn(2+) is required as a cofactor.

Its subcellular location is the cytoplasm. The enzyme catalyses a primary alcohol + NAD(+) = an aldehyde + NADH + H(+). It carries out the reaction a secondary alcohol + NAD(+) = a ketone + NADH + H(+). This is Alcohol dehydrogenase 1 from Naja naja (Indian cobra).